The chain runs to 586 residues: Inner membrane protein YejM (586 aa).

The Cytoplasmic segment spans residues 1-20 (MVTHRQRYREKVSQMVSWGH). Residues 21 to 43 (WFALFNILLSLVIGSRYLFIADW) form a helical membrane-spanning segment. Topologically, residues 44-57 (PTTLAGRIYSYVSI) are periplasmic. The helical transmembrane segment at 58-80 (IGHFSFLVFATYLLILFPLTFIV) threads the bilayer. The Cytoplasmic portion of the chain corresponds to 81-84 (GSQR). Residues 85–103 (LMRFLSVILATAGMTLLLI) form a helical membrane-spanning segment. Over 104 to 134 (DSEVFTRFHLHLNPIVWQLVINPDENEMARD) the chain is Periplasmic. Residues 135-157 (WQLMFISVPVILLLELVFATWSW) form a helical membrane-spanning segment. The Cytoplasmic portion of the chain corresponds to 158-168 (QKLRSLTRRRR). Residues 169-191 (FARPLAAFLFIAFIASHVVYIWA) form a helical membrane-spanning segment. Topologically, residues 192 to 586 (DANFYRPITM…LTDEKRFIAN (395 aa)) are periplasmic.

This sequence to H.influenzae HI_0842.

It localises to the cell inner membrane. This is Inner membrane protein YejM (yejM) from Escherichia coli O157:H7.